The sequence spans 518 residues: UDP-N-acetylmuramate--L-alanine ligase (518 aa).

Residue 158–164 (GTHGKTT) coordinates ATP.

It belongs to the MurCDEF family.

The protein localises to the cytoplasm. The enzyme catalyses UDP-N-acetyl-alpha-D-muramate + L-alanine + ATP = UDP-N-acetyl-alpha-D-muramoyl-L-alanine + ADP + phosphate + H(+). The protein operates within cell wall biogenesis; peptidoglycan biosynthesis. Cell wall formation. This is UDP-N-acetylmuramate--L-alanine ligase from Crocosphaera subtropica (strain ATCC 51142 / BH68) (Cyanothece sp. (strain ATCC 51142)).